A 122-amino-acid chain; its full sequence is Large ribosomal subunit protein uL14c (122 aa).

Belongs to the universal ribosomal protein uL14 family. In terms of assembly, part of the 50S ribosomal subunit.

It is found in the plastid. The protein localises to the chloroplast. In terms of biological role, binds to 23S rRNA. The polypeptide is Large ribosomal subunit protein uL14c (Amborella trichopoda).